The sequence spans 340 residues: MILPDRKQILDRELIRRIADTTISGSGHSDGLSEYASIRKAAFAFVESAVLGDQAYSPIENAELAFIVWILAALDENIITARTIIKARDTVEKQLRLVEHYEDLEEFGSRLGIEISVFGEQIGKDHLYRIGVADFATYASRVTGSKYRLSNQIVREGYVYVDEDVMAKVLREAFVSFMFDTLDQIRKEDAIETIKSVLDDLEKIRESYRKAHNVRMIAGKGDASMFPPCMKEIIKNLESGVNVSHMGRLALASFLHKAGYSEDEIVPYFRNAPDFDENITRYQIKHISGEISGTEYTPPKCETMRSNHLCYMDDDPLCHREWMKHPLTYYEVKRRNRKIR.

[4Fe-4S] cluster contacts are provided by Cys229, Cys301, Cys310, and Cys318.

The protein belongs to the eukaryotic-type primase large subunit family. In terms of assembly, heterodimer of a small subunit (PriS) and a large subunit (PriL). It depends on [4Fe-4S] cluster as a cofactor.

Its function is as follows. Regulatory subunit of DNA primase, an RNA polymerase that catalyzes the synthesis of short RNA molecules used as primers for DNA polymerase during DNA replication. Stabilizes and modulates the activity of the small subunit, increasing the rate of DNA synthesis, and conferring RNA synthesis capability. The DNA polymerase activity may enable DNA primase to also catalyze primer extension after primer synthesis. May also play a role in DNA repair. In Thermoplasma acidophilum (strain ATCC 25905 / DSM 1728 / JCM 9062 / NBRC 15155 / AMRC-C165), this protein is DNA primase large subunit PriL.